The chain runs to 354 residues: MTISIDKSVKKAEPSIFDLCDDWLKRDRFVFIGWSGLLLLPCAYFALGGFFTGNTFVTSWYTHGLASSYLEGCNVLTAAVSTPSNAMGHSLLLLWGPEAQGDFTRWCQLGGLWTFTALHGAFGLIGFMLRQFEIARAVKIRPYNAIAFSGPIAVFVSVFLIYPLGQQSWFFAPSFGVAAIFRFILFFQGFHNWTLNPFHMMGVAGVLGAALLCAIHGATVENTLFEDGDAANTFRAFNPTQSEETYSMVTANRFWSQIFGVAFANKRWLHFFMLFVPVTGLWMSAIGVVGLALNLRAYDFVSQEIRAAEDPEFETFYTKNLLLNEGIRAWMAAQDQPHENLVFPEEVLPRGNAL.

N-acetylthreonine is present on T2. A Phosphothreonine modification is found at T2. Residues 42–62 (CAYFALGGFFTGNTFVTSWYT) traverse the membrane as a helical segment. H119 is a chlorophyll a binding site. A helical transmembrane segment spans residues 126-142 (GFMLRQFEIARAVKIRP). Q131 and N144 together coordinate pheophytin a. The helical transmembrane segment at 154 to 167 (VFVSVFLIYPLGQQ) threads the bilayer. Residue H199 participates in chlorophyll a binding. The chain crosses the membrane as a helical span at residues 209-229 (AALLCAIHGATVENTLFEDGD). Residues H216 and F263 each contribute to the a plastoquinone site. H216 lines the Fe cation pocket. H270 lines the Fe cation pocket. The chain crosses the membrane as a helical span at residues 280–296 (GLWMSAIGVVGLALNLR).

Belongs to the reaction center PufL/M/PsbA/D family. PSII is composed of 1 copy each of membrane proteins PsbA, PsbB, PsbC, PsbD, PsbE, PsbF, PsbH, PsbI, PsbJ, PsbK, PsbL, PsbM, PsbT, PsbX, PsbY, PsbZ, Psb30/Ycf12, at least 3 peripheral proteins of the oxygen-evolving complex and a large number of cofactors. It forms dimeric complexes. The D1/D2 heterodimer binds P680, chlorophylls that are the primary electron donor of PSII, and subsequent electron acceptors. It shares a non-heme iron and each subunit binds pheophytin, quinone, additional chlorophylls, carotenoids and lipids. There is also a Cl(-1) ion associated with D1 and D2, which is required for oxygen evolution. The PSII complex binds additional chlorophylls, carotenoids and specific lipids. is required as a cofactor.

The protein localises to the plastid. The protein resides in the chloroplast thylakoid membrane. The enzyme catalyses 2 a plastoquinone + 4 hnu + 2 H2O = 2 a plastoquinol + O2. Its function is as follows. Photosystem II (PSII) is a light-driven water:plastoquinone oxidoreductase that uses light energy to abstract electrons from H(2)O, generating O(2) and a proton gradient subsequently used for ATP formation. It consists of a core antenna complex that captures photons, and an electron transfer chain that converts photonic excitation into a charge separation. The D1/D2 (PsbA/PsbD) reaction center heterodimer binds P680, the primary electron donor of PSII as well as several subsequent electron acceptors. D2 is needed for assembly of a stable PSII complex. In Mesostigma viride (Green alga), this protein is Photosystem II D2 protein.